We begin with the raw amino-acid sequence, 195 residues long: dCTP deaminase (195 aa).

Residues 110–115 (RSSLAR), D128, 136–138 (VLE), Y171, K178, and Q182 each bind dCTP. The active-site Proton donor/acceptor is the E138. A disordered region spans residues 171 to 195 (YSSRKDAKYKNQQSAVASRIDEDKE).

The protein belongs to the dCTP deaminase family. In terms of assembly, homotrimer.

The catalysed reaction is dCTP + H2O + H(+) = dUTP + NH4(+). Its pathway is pyrimidine metabolism; dUMP biosynthesis; dUMP from dCTP (dUTP route): step 1/2. Functionally, catalyzes the deamination of dCTP to dUTP. The protein is dCTP deaminase of Haemophilus influenzae (strain ATCC 51907 / DSM 11121 / KW20 / Rd).